Here is a 152-residue protein sequence, read N- to C-terminus: Acidic phospholipase A2 homolog textilotoxin D chain (152 aa).

The first 19 residues, 1–19, serve as a signal peptide directing secretion; it reads MHPAHLLVLLGVCVSLLGA. Intrachain disulfides connect Cys-38–Cys-104, Cys-54–Cys-151, Cys-56–Cys-72, Cys-71–Cys-132, Cys-78–Cys-125, Cys-88–Cys-118, and Cys-111–Cys-123. Asn-112 carries an N-linked (GlcNAc...) asparagine glycan.

It belongs to the phospholipase A2 family. Group I subfamily. D49 sub-subfamily. In terms of assembly, heterohexamer. 2 forms exist: 2 A or 2 B chains, 2 C chains and 2 covalently-linked D chains, and 1 A or 1 B, 1 C, 2 covalently-linked D chains and 2 differentially glycosylated covalently-linked D chains. Textilotoxin was originally described as pentameric. In terms of tissue distribution, expressed by the venom gland.

It is found in the secreted. Snake venom oligomeric phospholipase A2 that has potent presynaptic neurotoxicity. Chain D is not itself neurotoxic, but it is essential for the neurotoxicity of textilotoxin. Chain D possesses a very low phospholipase activity. This Pseudonaja textilis (Eastern brown snake) protein is Acidic phospholipase A2 homolog textilotoxin D chain.